Consider the following 434-residue polypeptide: 3-phosphoshikimate 1-carboxyvinyltransferase (434 aa).

3-phosphoshikimate is bound by residues Lys15, Ser16, and Arg20. Lys15 contacts phosphoenolpyruvate. Gly96 and Arg124 together coordinate phosphoenolpyruvate. 3-phosphoshikimate contacts are provided by Ser169, Gln171, Ser195, Asp319, and Lys346. Gln171 contacts phosphoenolpyruvate. Asp319 serves as the catalytic Proton acceptor. Positions 350 and 394 each coordinate phosphoenolpyruvate.

This sequence belongs to the EPSP synthase family. Monomer.

The protein resides in the cytoplasm. The catalysed reaction is 3-phosphoshikimate + phosphoenolpyruvate = 5-O-(1-carboxyvinyl)-3-phosphoshikimate + phosphate. It functions in the pathway metabolic intermediate biosynthesis; chorismate biosynthesis; chorismate from D-erythrose 4-phosphate and phosphoenolpyruvate: step 6/7. Functionally, catalyzes the transfer of the enolpyruvyl moiety of phosphoenolpyruvate (PEP) to the 5-hydroxyl of shikimate-3-phosphate (S3P) to produce enolpyruvyl shikimate-3-phosphate and inorganic phosphate. The protein is 3-phosphoshikimate 1-carboxyvinyltransferase of Chlorobaculum parvum (strain DSM 263 / NCIMB 8327) (Chlorobium vibrioforme subsp. thiosulfatophilum).